The chain runs to 315 residues: MSDSLRIIFAGTPDFAARHLGALLSSQHQIVGVFTQPDRPAGRGNKLTPSPVKVLAEQHDIPIFQPKSLRPEENQHLVADLNADIMVVVAYGLILPASVLAMPRLGCINVHGSLLPRWRGAAPIQRSLWAGDAKTGVTIMQMDVGLDTGDMLHKIECDIQPEDTSATLYDKLAQLGPQGLLVTLQQLAEGSAQPEVQDEAQVTYAEKLSKEEAKLDWSLSAVQLERCIRAFNPWPVSYFVVDEQPIKVWQAQVLATVDNAAPGTIIHADKHGIQVATADGVLNITQLQPAGKKAMSAADLLNSRREWFTLGNQLA.

Residue Ser-113–Pro-116 coordinates (6S)-5,6,7,8-tetrahydrofolate.

The protein belongs to the Fmt family.

It catalyses the reaction L-methionyl-tRNA(fMet) + (6R)-10-formyltetrahydrofolate = N-formyl-L-methionyl-tRNA(fMet) + (6S)-5,6,7,8-tetrahydrofolate + H(+). In terms of biological role, attaches a formyl group to the free amino group of methionyl-tRNA(fMet). The formyl group appears to play a dual role in the initiator identity of N-formylmethionyl-tRNA by promoting its recognition by IF2 and preventing the misappropriation of this tRNA by the elongation apparatus. This Yersinia enterocolitica serotype O:8 / biotype 1B (strain NCTC 13174 / 8081) protein is Methionyl-tRNA formyltransferase.